Consider the following 129-residue polypeptide: UPF0344 protein MW0851 (129 aa).

The next 4 membrane-spanning stretches (helical) occupy residues 1 to 21 (MLHL…ATYL), 36 to 56 (LHMI…WILI), 67 to 87 (MLLT…EVSI), and 99 to 119 (MFWI…ILPL).

This sequence belongs to the UPF0344 family.

The protein resides in the cell membrane. The sequence is that of UPF0344 protein MW0851 from Staphylococcus aureus (strain MW2).